The sequence spans 307 residues: Elongation factor Ts (307 aa).

The interval 80–83 (TDFV) is involved in Mg(2+) ion dislocation from EF-Tu.

The protein belongs to the EF-Ts family.

Its subcellular location is the cytoplasm. Associates with the EF-Tu.GDP complex and induces the exchange of GDP to GTP. It remains bound to the aminoacyl-tRNA.EF-Tu.GTP complex up to the GTP hydrolysis stage on the ribosome. This is Elongation factor Ts from Clostridium botulinum (strain Kyoto / Type A2).